The primary structure comprises 340 residues: TATA-box-binding protein (340 aa).

Positions 1–78 (MNLNSPAVSM…HSLQGSSMQM (78 aa)) are disordered. A compositionally biased stretch (low complexity) spans 57 to 68 (PQSIQPMQSQQM). Over residues 69–78 (HSLQGSSMQM) the composition is skewed to polar residues. 2 tandem repeats follow at residues 168–244 (LQNI…ARIV) and 258–335 (VQNM…YPIL).

This sequence belongs to the TBP family. Component of the TFIID basal transcription factor complex, composed of TATA-box-binding protein tbp-1, and a number of TBP-associated factors (TAFs). Binds DNA as monomer.

It localises to the nucleus. The TFIID basal transcription factor complex plays a major role in the initiation of RNA polymerase II (Pol II)-dependent transcription. TFIID recognizes and binds promoters via its subunit tbp-1, a TATA-box-binding protein, and promotes assembly of the pre-initiation complex (PIC). The TFIID complex consists of tbp-1 and TBP-associated factors (TAFs). General transcription factor that functions at the core of the TFIID complex. This is TATA-box-binding protein (tbp-1) from Caenorhabditis elegans.